Reading from the N-terminus, the 288-residue chain is Proteasome assembly chaperone 1 (288 aa).

Ala-2 carries the N-acetylalanine modification. Residues 13–35 (PCRAGTEDEEEEEEGRRETPEDR) form a disordered region. Thr-18 is subject to Phosphothreonine. The segment covering 26–35 (EGRRETPEDR) has biased composition (basic and acidic residues). Thr-54 bears the Phosphothreonine mark. A Phosphoserine modification is found at Ser-180. At Lys-264 the chain carries N6-acetyllysine.

It belongs to the PSMG1 family. As to quaternary structure, forms a heterodimer with PSMG2. The PSMG1-PSMG2 heterodimer interacts directly with the PSMA5 and PSMA7 proteasome alpha subunits. Post-translationally, degraded by the proteasome upon completion of 20S proteasome maturation. As to expression, in the adult, detected in brain, colon, leukocytes, breast and testis. Widely expressed in the fetus. Also expressed in a variety of proliferating cell lines.

The protein resides in the cytoplasm. The protein localises to the endoplasmic reticulum. Functionally, chaperone protein which promotes assembly of the 20S proteasome as part of a heterodimer with PSMG2. The PSMG1-PSMG2 heterodimer binds to the PSMA5 and PSMA7 proteasome subunits, promotes assembly of the proteasome alpha subunits into the heteroheptameric alpha ring and prevents alpha ring dimerization. The sequence is that of Proteasome assembly chaperone 1 from Homo sapiens (Human).